The primary structure comprises 263 residues: Undecaprenyl-diphosphatase (263 aa).

Transmembrane regions (helical) follow at residues 38–58, 75–95, 108–128, 135–155, 181–201, 217–237, and 242–262; these read RSDF…CLAL, RDYV…GLIV, PVAW…HFAG, VVTW…GVFP, FVFM…LLEM, VAFI…LGYI, and FTVF…WLPA.

This sequence belongs to the UppP family.

The protein resides in the cell inner membrane. The enzyme catalyses di-trans,octa-cis-undecaprenyl diphosphate + H2O = di-trans,octa-cis-undecaprenyl phosphate + phosphate + H(+). Its function is as follows. Catalyzes the dephosphorylation of undecaprenyl diphosphate (UPP). Confers resistance to bacitracin. This is Undecaprenyl-diphosphatase from Xanthomonas campestris pv. campestris (strain 8004).